Here is a 185-residue protein sequence, read N- to C-terminus: Acireductone dioxygenase (185 aa).

Fe(2+) is bound by residues histidine 96, histidine 98, glutamate 102, and histidine 140. Ni(2+) contacts are provided by histidine 96, histidine 98, glutamate 102, and histidine 140.

The protein belongs to the acireductone dioxygenase (ARD) family. Monomer. Requires Fe(2+) as cofactor. It depends on Ni(2+) as a cofactor.

The enzyme catalyses 1,2-dihydroxy-5-(methylsulfanyl)pent-1-en-3-one + O2 = 3-(methylsulfanyl)propanoate + CO + formate + 2 H(+). The catalysed reaction is 1,2-dihydroxy-5-(methylsulfanyl)pent-1-en-3-one + O2 = 4-methylsulfanyl-2-oxobutanoate + formate + 2 H(+). It functions in the pathway amino-acid biosynthesis; L-methionine biosynthesis via salvage pathway; L-methionine from S-methyl-5-thio-alpha-D-ribose 1-phosphate: step 5/6. Functionally, catalyzes 2 different reactions between oxygen and the acireductone 1,2-dihydroxy-3-keto-5-methylthiopentene (DHK-MTPene) depending upon the metal bound in the active site. Fe-containing acireductone dioxygenase (Fe-ARD) produces formate and 2-keto-4-methylthiobutyrate (KMTB), the alpha-ketoacid precursor of methionine in the methionine recycle pathway. Ni-containing acireductone dioxygenase (Ni-ARD) produces methylthiopropionate, carbon monoxide and formate, and does not lie on the methionine recycle pathway. The polypeptide is Acireductone dioxygenase (Marinobacter nauticus (strain ATCC 700491 / DSM 11845 / VT8) (Marinobacter aquaeolei)).